The sequence spans 319 residues: N-acetyl-D-glucosamine kinase (319 aa).

An ATP-binding site is contributed by Thr-14. 2 residues coordinate substrate: Asn-37 and Asp-113. Thr-135 serves as a coordination point for ATP. Substrate-binding positions include 153–155 (GWG) and Asp-160. Ala-220 contributes to the ATP binding site.

Belongs to the eukaryotic-type N-acetylglucosamine kinase family. As to quaternary structure, homodimer.

The enzyme catalyses N-acetyl-D-glucosamine + ATP = N-acetyl-D-glucosamine 6-phosphate + ADP + H(+). In terms of biological role, converts N-acetylglucosamine (GlcNAc), a major component of complex carbohydrates, into GlcNAc 6-phosphate. Also has ManNAc kinase activity. In Dictyostelium discoideum (Social amoeba), this protein is N-acetyl-D-glucosamine kinase (nagk).